The primary structure comprises 545 residues: Chromosomal replication initiator protein DnaA (545 aa).

The segment at 1–72 is domain I, interacts with DnaA modulators; sequence MNDFWQHCSA…DMARDFWQAP (72 aa). The tract at residues 72-208 is domain II; the sequence is PVDVQFVLDP…GETDSMYERS (137 aa). A compositionally biased stretch (low complexity) spans 90–105; the sequence is AAAPAPASARPASAPG. 2 disordered regions span residues 90-112 and 181-204; these read AAAP…GSAG and AAAR…TDSM. The segment covering 189–201 has biased composition (polar residues); the sequence is PGQSASSNGNGET. The interval 209–425 is domain III, AAA+ region; sequence KLNPVLTFDN…GALRKILAYS (217 aa). Residues G253, G255, K256, and T257 each coordinate ATP. Residues 426-545 form a domain IV, binds dsDNA region; the sequence is KFHGREITIE…LHVLEQTLKG (120 aa).

It belongs to the DnaA family. Oligomerizes as a right-handed, spiral filament on DNA at oriC.

The protein localises to the cytoplasm. Its function is as follows. Plays an essential role in the initiation and regulation of chromosomal replication. ATP-DnaA binds to the origin of replication (oriC) to initiate formation of the DNA replication initiation complex once per cell cycle. Binds the DnaA box (a 9 base pair repeat at the origin) and separates the double-stranded (ds)DNA. Forms a right-handed helical filament on oriC DNA; dsDNA binds to the exterior of the filament while single-stranded (ss)DNA is stabiized in the filament's interior. The ATP-DnaA-oriC complex binds and stabilizes one strand of the AT-rich DNA unwinding element (DUE), permitting loading of DNA polymerase. After initiation quickly degrades to an ADP-DnaA complex that is not apt for DNA replication. Binds acidic phospholipids. This chain is Chromosomal replication initiator protein DnaA, found in Paraburkholderia phytofirmans (strain DSM 17436 / LMG 22146 / PsJN) (Burkholderia phytofirmans).